Consider the following 843-residue polypeptide: MPLSYQHFRKLLLLDDEAGPLEEELPRLADEGLNRRVAEDLNLGNLNVSIPWTHKVGNFTGLYSSTVPVFNPEWQTPSFPNIHLQEDIINRCQQYVGPLTVNEKRRLKLIMPARFYPNLTKYLPLDKGIKPYYPEHAVNHYFKTRHYLHTLWQAGILYKRETTRSASFCGSPYSWEQELQHGRLVFQTSTRHGDESFCSQSSGILSRSPVGPCVRSQLKQSRLGLQPQQGSLARGKSGRSGSIRARVHPTTRRSFGVEPSGSGHIDNSASSASSCLHQSAVRKTAYSHLSTSKRQSSSGHAVELHNIPPSSARSQSEGPIFSCWWLQFRNSKPCSDYCLSHIVNLLEDWGPCTEHGEHNIRIPRTPARVTGGVFLVDKNPHNTTESRLVVDFSQFSRGSTHVSWPKFAVPNLQSLTNLLSSNLSWLSLDVSAAFYHIPLHPAAMPHLLVGSSGLPRYVARLSSTSRNINYQHGTMQDLHDSCSRNLYVSLLLLYKTFGRKLHLYSHPIILGFRKIPMGVGLSPFLLAQFTSAICSVVRRAFPHCLAFSYMDDVVLGAKSVQHLESLFTSVTNFLLSLGIHLNPNKTKRWGYSLNFMGYVIGSWGTLPQEHIVLKIKQCFRKLPVNRPIDWKVCQRIVGLLGFAAPFTQCGYPALMPLYACIQSKQAFTFSPTYKAFLCQQYLHLYPVARQRSGLCQVFADATPTGWGLAIGHRRMRGTFVAPLPIHTAELLAACFARSRSGAKLIGTDNSVVLSRKYTSFPWLLGCAANWILRGTSFVYVPSALNPADDPSRGRLGLYRPLLRLPFQPTTGRTSLYAVSPSVPSHLPDRVHFASPLHVAWKPP.

The interval 1 to 177 is terminal protein domain (TP); sequence MPLSYQHFRK…FCGSPYSWEQ (177 aa). Residues 178 to 346 form a spacer region; the sequence is ELQHGRLVFQ…YCLSHIVNLL (169 aa). Disordered stretches follow at residues 218 to 243 and 290 to 316; these read LKQS…SGSI and STSK…RSQS. Residues 290–299 show a composition bias toward polar residues; sequence STSKRQSSSG. The polymerase/reverse transcriptase domain (RT) stretch occupies residues 347–690; it reads EDWGPCTEHG…YLHLYPVARQ (344 aa). The region spanning 357-600 is the Reverse transcriptase domain; it reads EHNIRIPRTP…YSLNFMGYVI (244 aa). The Mg(2+) site is built by Asp-429, Asp-551, and Asp-552.

The protein belongs to the hepadnaviridae P protein family.

The catalysed reaction is DNA(n) + a 2'-deoxyribonucleoside 5'-triphosphate = DNA(n+1) + diphosphate. It catalyses the reaction Endonucleolytic cleavage to 5'-phosphomonoester.. Activated by host HSP70 and HSP40 in vitro to be able to bind the epsilon loop of the pgRNA. Because deletion of the RNase H region renders the protein partly chaperone-independent, the chaperones may be needed indirectly to relieve occlusion of the RNA-binding site by this domain. Inhibited by several reverse-transcriptase inhibitors: Lamivudine, Adefovir and Entecavir. In terms of biological role, multifunctional enzyme that converts the viral RNA genome into dsDNA in viral cytoplasmic capsids. This enzyme displays a DNA polymerase activity that can copy either DNA or RNA templates, and a ribonuclease H (RNase H) activity that cleaves the RNA strand of RNA-DNA heteroduplexes in a partially processive 3'- to 5'-endonucleasic mode. Neo-synthesized pregenomic RNA (pgRNA) are encapsidated together with the P protein, and reverse-transcribed inside the nucleocapsid. Initiation of reverse-transcription occurs first by binding the epsilon loop on the pgRNA genome, and is initiated by protein priming, thereby the 5'-end of (-)DNA is covalently linked to P protein. Partial (+)DNA is synthesized from the (-)DNA template and generates the relaxed circular DNA (RC-DNA) genome. After budding and infection, the RC-DNA migrates in the nucleus, and is converted into a plasmid-like covalently closed circular DNA (cccDNA). The activity of P protein does not seem to be necessary for cccDNA generation, and is presumably released from (+)DNA by host nuclear DNA repair machinery. The sequence is that of Protein P from Homo sapiens (Human).